A 325-amino-acid chain; its full sequence is Elongation factor P--(R)-beta-lysine ligase (325 aa).

76–78 (SPE) is a substrate binding site. ATP contacts are provided by residues 100 to 102 (RNE) and N109. Y118 contacts substrate. ATP is bound at residue 244–245 (EL). E251 provides a ligand contact to substrate. G300 is a binding site for ATP.

Belongs to the class-II aminoacyl-tRNA synthetase family. EpmA subfamily. Homodimer.

The enzyme catalyses D-beta-lysine + L-lysyl-[protein] + ATP = N(6)-((3R)-3,6-diaminohexanoyl)-L-lysyl-[protein] + AMP + diphosphate + H(+). With EpmB is involved in the beta-lysylation step of the post-translational modification of translation elongation factor P (EF-P) on 'Lys-34'. Catalyzes the ATP-dependent activation of (R)-beta-lysine produced by EpmB, forming a lysyl-adenylate, from which the beta-lysyl moiety is then transferred to the epsilon-amino group of EF-P 'Lys-34'. This is Elongation factor P--(R)-beta-lysine ligase from Salmonella typhi.